Here is a 718-residue protein sequence, read N- to C-terminus: Sodium/myo-inositol cotransporter (718 aa).

The Extracellular portion of the chain corresponds to 1–9 (MRAVLETAD). A helical transmembrane segment spans residues 10–29 (IAIVALYFILVMCIGFFAMW). Topologically, residues 30–38 (KSNRSTVSG) are cytoplasmic. Residues 39–57 (YFLAGRSMTWVAIGASLFV) traverse the membrane as a helical segment. Residues 58–86 (SNIGSEHFIGLAGSGAASGFAVGAWEFNA) lie on the Extracellular side of the membrane. Residues 87-110 (LLLLQLLGWVFIPIYIRSGVYTMP) form a helical membrane-spanning segment. The Cytoplasmic segment spans residues 111 to 123 (EYLSKRFGGHRIQ). A helical transmembrane segment spans residues 124–144 (VYFAALSLILYIFTKLSVDLY). Over 145–157 (SGALFIQESMGWN) the chain is Extracellular. The chain crosses the membrane as a helical span at residues 158-183 (LYVSVILLIGMTALLTVTGGLVAVIY). The Cytoplasmic segment spans residues 184 to 186 (TDT). Residues 187-205 (LQALLMIVGALTLMVISMM) traverse the membrane as a helical segment. Topologically, residues 206–303 (EIGGFEEVKR…HAKGSTLMAG (98 aa)) are extracellular. An N-linked (GlcNAc...) asparagine glycan is attached at Asn232. The helical transmembrane segment at 304–324 (FLKLLPMFIIVVPGMISRILF) threads the bilayer. Residues 325–353 (ADDIACINPEHCMQVCGSRAGCSNIAYPR) lie on the Cytoplasmic side of the membrane. The chain crosses the membrane as a helical span at residues 354-376 (LVMKLVPVGLRGLMMAVMIAALM). Over 377–406 (SDLDSIFNSASTIFTLDVYKLIRKSASSRE) the chain is Extracellular. The helical transmembrane segment at 407–430 (LMIVGRIFVAFMVVISIAWVPIIV) threads the bilayer. The Cytoplasmic portion of the chain corresponds to 431–443 (EMQGGQMYLYIQE). Residues 444–462 (VADYLTPPVAALFLLAIFW) traverse the membrane as a helical segment. Topologically, residues 463 to 510 (KRCNEQGAFYGGMAGFILVVVRLTLAFAYRAPECDQPDNRPVFIKDIH) are extracellular. The chain crosses the membrane as a helical span at residues 511–532 (YMYVATALFWITGLITVIVSLL). Residues 533–695 (TPPPTKEQIR…QMLEEPPQVK (163 aa)) are Cytoplasmic-facing. A phosphoserine mark is found at Ser594 and Ser632. Residues 696-716 (VILNIGLFGVCSLGIFMFVYF) form a helical membrane-spanning segment. The Extracellular portion of the chain corresponds to 717–718 (SL).

Belongs to the sodium:solute symporter (SSF) (TC 2.A.21) family. In terms of assembly, interacts with KCNQ2 (via the pore module). Interacts with KCNQ1; this interaction is direct. Forms coregulatory complexes with ion channels KCNQ2-KCNQ3 and KCNQ1-KCNE2.

The protein localises to the apical cell membrane. Its subcellular location is the basolateral cell membrane. Electrogenic Na(+)-coupled sugar symporter that actively transports myo-inositol and its stereoisomer scyllo-inositol across the plasma membrane, with a Na(+) to sugar coupling ratio of 2:1. Maintains myo-inositol concentration gradient that defines cell volume and fluid balance during osmotic stress, in particular in the fetoplacental unit and central nervous system. Forms coregulatory complexes with voltage-gated K(+) ion channels, allosterically altering ion selectivity, voltage dependence and gating kinetics of the channel. In turn, K(+) efflux through the channel forms a local electrical gradient that modulates electrogenic Na(+)-coupled myo-inositol influx through the transporter. Associates with KCNQ1-KCNE2 channel in the apical membrane of choroid plexus epithelium and regulates the myo-inositol gradient between blood and cerebrospinal fluid with an impact on neuron excitability. Associates with KCNQ2-KCNQ3 channel altering ion selectivity, increasing Na(+) and Cs(+) permeation relative to K(+) permeation. Provides myo-inositol precursor for biosynthesis of phosphoinositides such as PI(4,5)P2, thus indirectly affecting the activity of phosphoinositide-dependent ion channels and Ca(2+) signaling upon osmotic stress. The protein is Sodium/myo-inositol cotransporter (SLC5A3) of Bos taurus (Bovine).